The sequence spans 207 residues: Large ribosomal subunit protein uL4 (207 aa).

The disordered stretch occupies residues 49–78; sequence HAVKNRSAVSGGGRKPWRQKGTGRARQGSI.

The protein belongs to the universal ribosomal protein uL4 family. Part of the 50S ribosomal subunit.

Its function is as follows. One of the primary rRNA binding proteins, this protein initially binds near the 5'-end of the 23S rRNA. It is important during the early stages of 50S assembly. It makes multiple contacts with different domains of the 23S rRNA in the assembled 50S subunit and ribosome. In terms of biological role, forms part of the polypeptide exit tunnel. This Streptococcus pneumoniae serotype 19F (strain G54) protein is Large ribosomal subunit protein uL4.